The following is a 912-amino-acid chain: Protein translocase subunit SecA (912 aa).

ATP-binding positions include glutamine 87, glycine 105–threonine 109, and aspartate 508. Residues aspartate 865–serine 912 form a disordered region. Zn(2+) contacts are provided by cysteine 896, cysteine 898, cysteine 907, and histidine 908. Basic residues predominate over residues lysine 902–serine 912.

It belongs to the SecA family. Monomer and homodimer. Part of the essential Sec protein translocation apparatus which comprises SecA, SecYEG and auxiliary proteins SecDF-YajC and YidC. Zn(2+) is required as a cofactor.

It localises to the cell inner membrane. The protein localises to the cytoplasm. The enzyme catalyses ATP + H2O + cellular proteinSide 1 = ADP + phosphate + cellular proteinSide 2.. In terms of biological role, part of the Sec protein translocase complex. Interacts with the SecYEG preprotein conducting channel. Has a central role in coupling the hydrolysis of ATP to the transfer of proteins into and across the cell membrane, serving both as a receptor for the preprotein-SecB complex and as an ATP-driven molecular motor driving the stepwise translocation of polypeptide chains across the membrane. This Xanthomonas oryzae pv. oryzae (strain PXO99A) protein is Protein translocase subunit SecA.